The sequence spans 165 residues: Phosphopantetheine adenylyltransferase (165 aa).

Thr-10 contacts substrate. Residues 10-11 and His-18 each bind ATP; that span reads TF. Substrate is bound by residues Lys-42, Leu-75, and Arg-89. ATP-binding positions include 90 to 92, Glu-100, and 125 to 131; these read GVR and VSFISSS.

The protein belongs to the bacterial CoaD family. As to quaternary structure, homohexamer. Mg(2+) is required as a cofactor.

Its subcellular location is the cytoplasm. The catalysed reaction is (R)-4'-phosphopantetheine + ATP + H(+) = 3'-dephospho-CoA + diphosphate. It participates in cofactor biosynthesis; coenzyme A biosynthesis; CoA from (R)-pantothenate: step 4/5. Reversibly transfers an adenylyl group from ATP to 4'-phosphopantetheine, yielding dephospho-CoA (dPCoA) and pyrophosphate. The chain is Phosphopantetheine adenylyltransferase from Buchnera aphidicola subsp. Acyrthosiphon pisum (strain 5A).